We begin with the raw amino-acid sequence, 200 residues long: uncharacterized protein (200 aa).

Residues 3–119 (RLFIAEDQRM…DLADAIRKCV (117 aa)) enclose the Response regulatory domain. Asp-54 carries the post-translational modification 4-aspartylphosphate. Residues 133–198 (MMRDENPLTV…EAASIAEEKG (66 aa)) enclose the HTH luxR-type domain. Residues 157–176 (TKDITLELYLSQGTVRNYIS) constitute a DNA-binding region (H-T-H motif).

Phosphorylated by YvfT.

Its subcellular location is the cytoplasm. Functionally, member of the two-component regulatory system YvfT/YvfU. This is an uncharacterized protein from Bacillus subtilis (strain 168).